We begin with the raw amino-acid sequence, 188 residues long: Acireductone dioxygenase (188 aa).

4 residues coordinate Fe(2+): histidine 97, histidine 99, glutamate 103, and histidine 141. The Ni(2+) site is built by histidine 97, histidine 99, glutamate 103, and histidine 141.

It belongs to the acireductone dioxygenase (ARD) family. In terms of assembly, monomer. Fe(2+) is required as a cofactor. It depends on Ni(2+) as a cofactor.

The catalysed reaction is 1,2-dihydroxy-5-(methylsulfanyl)pent-1-en-3-one + O2 = 3-(methylsulfanyl)propanoate + CO + formate + 2 H(+). It carries out the reaction 1,2-dihydroxy-5-(methylsulfanyl)pent-1-en-3-one + O2 = 4-methylsulfanyl-2-oxobutanoate + formate + 2 H(+). Its pathway is amino-acid biosynthesis; L-methionine biosynthesis via salvage pathway; L-methionine from S-methyl-5-thio-alpha-D-ribose 1-phosphate: step 5/6. In terms of biological role, catalyzes 2 different reactions between oxygen and the acireductone 1,2-dihydroxy-3-keto-5-methylthiopentene (DHK-MTPene) depending upon the metal bound in the active site. Fe-containing acireductone dioxygenase (Fe-ARD) produces formate and 2-keto-4-methylthiobutyrate (KMTB), the alpha-ketoacid precursor of methionine in the methionine recycle pathway. Ni-containing acireductone dioxygenase (Ni-ARD) produces methylthiopropionate, carbon monoxide and formate, and does not lie on the methionine recycle pathway. The polypeptide is Acireductone dioxygenase (Gluconobacter oxydans (strain 621H) (Gluconobacter suboxydans)).